The primary structure comprises 176 residues: dCTP deaminase (176 aa).

Residues 99–104 (RSTLAR) and Asp-115 contribute to the dCTP site. The active-site Proton donor/acceptor is Glu-125. Residue Gln-163 participates in dCTP binding.

The protein belongs to the dCTP deaminase family. In terms of assembly, homotrimer.

It catalyses the reaction dCTP + H2O + H(+) = dUTP + NH4(+). Its pathway is pyrimidine metabolism; dUMP biosynthesis; dUMP from dCTP (dUTP route): step 1/2. In terms of biological role, catalyzes the deamination of dCTP to dUTP. The chain is dCTP deaminase from Pyrobaculum islandicum (strain DSM 4184 / JCM 9189 / GEO3).